Here is a 244-residue protein sequence, read N- to C-terminus: 2-C-methyl-D-erythritol 4-phosphate cytidylyltransferase (244 aa).

The protein belongs to the IspD/TarI cytidylyltransferase family. IspD subfamily.

The enzyme catalyses 2-C-methyl-D-erythritol 4-phosphate + CTP + H(+) = 4-CDP-2-C-methyl-D-erythritol + diphosphate. Its pathway is isoprenoid biosynthesis; isopentenyl diphosphate biosynthesis via DXP pathway; isopentenyl diphosphate from 1-deoxy-D-xylulose 5-phosphate: step 2/6. Its function is as follows. Catalyzes the formation of 4-diphosphocytidyl-2-C-methyl-D-erythritol from CTP and 2-C-methyl-D-erythritol 4-phosphate (MEP). The polypeptide is 2-C-methyl-D-erythritol 4-phosphate cytidylyltransferase (Prosthecochloris aestuarii (strain DSM 271 / SK 413)).